The following is a 189-amino-acid chain: Selenoprotein S (189 aa).

A helical membrane pass occupies residues 28–48 (SLLATYGWYIVFSCILLYVVF). Positions 78–90 (RQEALAAARLKMQ) are VCP/p97-interacting motif (VIM). The tract at residues 115-189 (KIEMWDSMQE…RRGPSSGGUG (75 aa)) is disordered. At serine 140 the chain carries Phosphoserine. Residues 159–173 (RGGGYNPLSGEGGGA) are compositionally biased toward gly residues. Position 188 (selenocysteine 188) is a non-standard amino acid, selenocysteine.

Belongs to the selenoprotein S family. In terms of assembly, interacts with DERL1 and (via VIM motif) with VCP, suggesting that it forms a membrane complex with DERL1 that serves as a receptor for VCP. Also interacts with DERL2, DERL3 and SELENOK. The SELENOK-SELENOS complex interacts with VCP. Interacts with CCDC47. In terms of processing, truncated SELENOS proteins produced by failed UGA/Sec decoding are ubiquitinated by the CRL2(KLHDC2) and CRL2(KLHDC3) complexes, which recognizes the glycine (Gly) at the C-terminus of truncated SELENOS proteins. Truncated SELENOS proteins produced by failed UGA/Sec decoding are also ubiquitinated by the CRL5(KLHDC1) complex.

It localises to the endoplasmic reticulum membrane. The protein resides in the cytoplasm. Its function is as follows. Involved in the degradation process of misfolded endoplasmic reticulum (ER) luminal proteins. Participates in the transfer of misfolded proteins from the ER to the cytosol, where they are destroyed by the proteasome in a ubiquitin-dependent manner. Probably acts by serving as a linker between DERL1, which mediates the retrotranslocation of misfolded proteins into the cytosol, and the ATPase complex VCP, which mediates the translocation and ubiquitination. This chain is Selenoprotein S, found in Homo sapiens (Human).